Consider the following 439-residue polypeptide: uncharacterized protein (439 aa).

Residues 1–19 form the signal peptide; that stretch reads MKKLLLTASIICLASAGLA.

This is an uncharacterized protein from Rickettsia felis (strain ATCC VR-1525 / URRWXCal2) (Rickettsia azadi).